We begin with the raw amino-acid sequence, 193 residues long: dCTP deaminase (193 aa).

DCTP-binding positions include arginine 110–arginine 115, aspartate 128, valine 136–glutamate 138, tyrosine 171, lysine 178, and glutamine 182. The active-site Proton donor/acceptor is glutamate 138. Residues arginine 169 to aspartate 193 are disordered.

Belongs to the dCTP deaminase family. In terms of assembly, homotrimer.

It catalyses the reaction dCTP + H2O + H(+) = dUTP + NH4(+). The protein operates within pyrimidine metabolism; dUMP biosynthesis; dUMP from dCTP (dUTP route): step 1/2. Catalyzes the deamination of dCTP to dUTP. The polypeptide is dCTP deaminase (Erwinia tasmaniensis (strain DSM 17950 / CFBP 7177 / CIP 109463 / NCPPB 4357 / Et1/99)).